Reading from the N-terminus, the 174-residue chain is Crossover junction endodeoxyribonuclease RuvC (174 aa).

Residues Asp-8, Glu-67, and Asp-139 contribute to the active site. Asp-8, Glu-67, and Asp-139 together coordinate Mg(2+).

It belongs to the RuvC family. Homodimer which binds Holliday junction (HJ) DNA. The HJ becomes 2-fold symmetrical on binding to RuvC with unstacked arms; it has a different conformation from HJ DNA in complex with RuvA. In the full resolvosome a probable DNA-RuvA(4)-RuvB(12)-RuvC(2) complex forms which resolves the HJ. Mg(2+) is required as a cofactor.

The protein localises to the cytoplasm. It carries out the reaction Endonucleolytic cleavage at a junction such as a reciprocal single-stranded crossover between two homologous DNA duplexes (Holliday junction).. In terms of biological role, the RuvA-RuvB-RuvC complex processes Holliday junction (HJ) DNA during genetic recombination and DNA repair. Endonuclease that resolves HJ intermediates. Cleaves cruciform DNA by making single-stranded nicks across the HJ at symmetrical positions within the homologous arms, yielding a 5'-phosphate and a 3'-hydroxyl group; requires a central core of homology in the junction. The consensus cleavage sequence is 5'-(A/T)TT(C/G)-3'. Cleavage occurs on the 3'-side of the TT dinucleotide at the point of strand exchange. HJ branch migration catalyzed by RuvA-RuvB allows RuvC to scan DNA until it finds its consensus sequence, where it cleaves and resolves the cruciform DNA. In Stutzerimonas stutzeri (strain A1501) (Pseudomonas stutzeri), this protein is Crossover junction endodeoxyribonuclease RuvC.